A 375-amino-acid polypeptide reads, in one-letter code: Putative F-box protein At5g52620 (375 aa).

One can recognise an F-box domain in the interval 5 to 52; that stretch reads GKSDPIPIDIILDILSRLSTNSIAKFGLASKFCGSILRGQDFIELFLI.

In Arabidopsis thaliana (Mouse-ear cress), this protein is Putative F-box protein At5g52620.